A 590-amino-acid chain; its full sequence is Aspartate--tRNA ligase (590 aa).

L-aspartate is bound at residue glutamate 180. The segment at 204–207 is aspartate; the sequence is QLFK. Arginine 226 serves as a coordination point for L-aspartate. ATP-binding positions include 226–228 and glutamine 235; that span reads RDE. Histidine 454 lines the L-aspartate pocket. Glutamate 488 lines the ATP pocket. Arginine 495 contributes to the L-aspartate binding site. Position 540 to 543 (540 to 543) interacts with ATP; it reads GFDR.

The protein belongs to the class-II aminoacyl-tRNA synthetase family. Type 1 subfamily. In terms of assembly, homodimer.

The protein localises to the cytoplasm. The catalysed reaction is tRNA(Asp) + L-aspartate + ATP = L-aspartyl-tRNA(Asp) + AMP + diphosphate. In terms of biological role, catalyzes the attachment of L-aspartate to tRNA(Asp) in a two-step reaction: L-aspartate is first activated by ATP to form Asp-AMP and then transferred to the acceptor end of tRNA(Asp). The sequence is that of Aspartate--tRNA ligase from Clostridium kluyveri (strain NBRC 12016).